Consider the following 421-residue polypeptide: Tryptophan synthase beta chain (421 aa).

The residue at position 112 (K112) is an N6-(pyridoxal phosphate)lysine.

This sequence belongs to the TrpB family. As to quaternary structure, tetramer of two alpha and two beta chains. Pyridoxal 5'-phosphate is required as a cofactor.

The catalysed reaction is (1S,2R)-1-C-(indol-3-yl)glycerol 3-phosphate + L-serine = D-glyceraldehyde 3-phosphate + L-tryptophan + H2O. Its pathway is amino-acid biosynthesis; L-tryptophan biosynthesis; L-tryptophan from chorismate: step 5/5. Its function is as follows. The beta subunit is responsible for the synthesis of L-tryptophan from indole and L-serine. This Mycobacterium bovis (strain ATCC BAA-935 / AF2122/97) protein is Tryptophan synthase beta chain (trpB).